A 402-amino-acid chain; its full sequence is Acetate kinase (402 aa).

Residue Asn13 coordinates Mg(2+). Lys20 lines the ATP pocket. Arg94 serves as a coordination point for substrate. Residue Asp151 is the Proton donor/acceptor of the active site. ATP is bound by residues 211–215 (HLGNG), 285–287 (DFR), and 333–337 (GVGEN). Glu387 provides a ligand contact to Mg(2+).

Belongs to the acetokinase family. Homodimer. It depends on Mg(2+) as a cofactor. Mn(2+) is required as a cofactor.

It is found in the cytoplasm. The enzyme catalyses acetate + ATP = acetyl phosphate + ADP. Its pathway is metabolic intermediate biosynthesis; acetyl-CoA biosynthesis; acetyl-CoA from acetate: step 1/2. Functionally, catalyzes the formation of acetyl phosphate from acetate and ATP. Can also catalyze the reverse reaction. This Nocardia farcinica (strain IFM 10152) protein is Acetate kinase.